The chain runs to 130 residues: S-adenosylmethionine decarboxylase proenzyme (130 aa).

Catalysis depends on S63, which acts as the Schiff-base intermediate with substrate; via pyruvic acid. S63 carries the post-translational modification Pyruvic acid (Ser); by autocatalysis. Residue H68 is the Proton acceptor; for processing activity of the active site. The active-site Proton donor; for catalytic activity is the C83.

The protein belongs to the prokaryotic AdoMetDC family. Type 1 subfamily. Heterotetramer of two alpha and two beta chains arranged as a dimer of alpha/beta heterodimers. It depends on pyruvate as a cofactor. Post-translationally, is synthesized initially as an inactive proenzyme. Formation of the active enzyme involves a self-maturation process in which the active site pyruvoyl group is generated from an internal serine residue via an autocatalytic post-translational modification. Two non-identical subunits are generated from the proenzyme in this reaction, and the pyruvate is formed at the N-terminus of the alpha chain, which is derived from the carboxyl end of the proenzyme. The post-translation cleavage follows an unusual pathway, termed non-hydrolytic serinolysis, in which the side chain hydroxyl group of the serine supplies its oxygen atom to form the C-terminus of the beta chain, while the remainder of the serine residue undergoes an oxidative deamination to produce ammonia and the pyruvoyl group blocking the N-terminus of the alpha chain.

The enzyme catalyses S-adenosyl-L-methionine + H(+) = S-adenosyl 3-(methylsulfanyl)propylamine + CO2. Its pathway is amine and polyamine biosynthesis; S-adenosylmethioninamine biosynthesis; S-adenosylmethioninamine from S-adenosyl-L-methionine: step 1/1. In terms of biological role, catalyzes the decarboxylation of S-adenosylmethionine to S-adenosylmethioninamine (dcAdoMet), the propylamine donor required for the synthesis of the polyamines spermine and spermidine from the diamine putrescine. The chain is S-adenosylmethionine decarboxylase proenzyme from Thermosipho melanesiensis (strain DSM 12029 / CIP 104789 / BI429).